The following is a 1157-amino-acid chain: Probable ATP-dependent RNA helicase DHX37 (1157 aa).

Basic residues predominate over residues 1 to 10; sequence MGKLRRRYNI. 2 disordered regions span residues 1-77 and 116-225; these read MGKL…KKEK and TSKL…AAPP. The span at 21 to 30 shows a compositional bias: pro residues; sequence SKGPPEPPPV. Residues 159–184 are compositionally biased toward acidic residues; the sequence is AEEEEEEEEESESELEEESELDEDPA. Pro residues-rich tracts occupy residues 198–208 and 216–225; these read PLPPAPAPSSQ and VPPPPAAAPP. The region spanning 262 to 429 is the Helicase ATP-binding domain; the sequence is MEAVAEHPIV…PRLFAKPPPV (168 aa). 275 to 282 is an ATP binding site; sequence GETGSGKT. The DEAH box signature appears at 372-375; it reads DEAH. The Helicase C-terminal domain occupies 459–716; that stretch reads KVCKIHRMLP…DLILQMKALN (258 aa). 2 disordered regions span residues 494-523 and 542-584; these read PPSRARPQEKDDDQKDSVEEMRKFKKSRAR and VLPA…QPDA. Over residues 499–515 the composition is skewed to basic and acidic residues; the sequence is RPQEKDDDQKDSVEEMR. The segment covering 547-571 has biased composition (acidic residues); it reads EGDEDREAEVDEEEGALDSDLDLDL.

This sequence belongs to the DEAD box helicase family. DEAH subfamily. As to quaternary structure, part of the small subunit (SSU) processome, composed of more than 70 proteins and the RNA chaperone small nucleolar RNA (snoRNA) U3. Interacts with UTP14A. As to expression, expressed in the fallopian tube, ovary, uterus and testis. Also expressed in the brain.

It is found in the nucleus. The protein localises to the nucleolus. The protein resides in the cytoplasm. It localises to the nucleus membrane. It carries out the reaction ATP + H2O = ADP + phosphate + H(+). Functionally, ATP-binding RNA helicase that plays a role in maturation of the small ribosomal subunit in ribosome biogenesis. Required for the release of the U3 snoRNP from pre-ribosomal particles. Part of the small subunit (SSU) processome, first precursor of the small eukaryotic ribosomal subunit. During the assembly of the SSU processome in the nucleolus, many ribosome biogenesis factors, an RNA chaperone and ribosomal proteins associate with the nascent pre-rRNA and work in concert to generate RNA folding, modifications, rearrangements and cleavage as well as targeted degradation of pre-ribosomal RNA by the RNA exosome. Plays a role in early testis development. Probably also plays a role in brain development. This is Probable ATP-dependent RNA helicase DHX37 from Homo sapiens (Human).